The primary structure comprises 75 residues: U6-lycotoxin-Ls1h (75 aa).

Positions 1-21 are cleaved as a signal peptide; sequence MKLLLFTALVLVVISLIEVEA. Residues 22-25 constitute a propeptide that is removed on maturation; sequence ENER.

This sequence belongs to the neurotoxin 19 (CSTX) family. 06 (U6-Lctx) subfamily. Post-translationally, contains 4 disulfide bonds. As to expression, expressed by the venom gland.

It localises to the secreted. The chain is U6-lycotoxin-Ls1h from Lycosa singoriensis (Wolf spider).